The following is a 418-amino-acid chain: Tyrosine--tRNA ligase (418 aa).

Tyrosine 38 is an L-tyrosine binding site. The 'HIGH' region motif lies at 43 to 52; sequence CTAKSLHVGS. Tyrosine 175 and glutamine 179 together coordinate L-tyrosine. The short motif at 235–239 is the 'KMSKS' region element; sequence KMGKT. Residue lysine 238 participates in ATP binding. The region spanning 348-413 is the S4 RNA-binding domain; it reads LPIIKLLQIS…CGKKRHLKIM (66 aa).

This sequence belongs to the class-I aminoacyl-tRNA synthetase family. TyrS type 1 subfamily. Homodimer.

The protein resides in the cytoplasm. It carries out the reaction tRNA(Tyr) + L-tyrosine + ATP = L-tyrosyl-tRNA(Tyr) + AMP + diphosphate + H(+). In terms of biological role, catalyzes the attachment of tyrosine to tRNA(Tyr) in a two-step reaction: tyrosine is first activated by ATP to form Tyr-AMP and then transferred to the acceptor end of tRNA(Tyr). The chain is Tyrosine--tRNA ligase from Ehrlichia canis (strain Jake).